The sequence spans 314 residues: 4-hydroxy-3-methylbut-2-enyl diphosphate reductase (314 aa).

Position 12 (Cys12) interacts with [4Fe-4S] cluster. Residues His43 and His81 each coordinate (2E)-4-hydroxy-3-methylbut-2-enyl diphosphate. Dimethylallyl diphosphate is bound by residues His43 and His81. Residues His43 and His81 each contribute to the isopentenyl diphosphate site. Cys103 is a binding site for [4Fe-4S] cluster. His131 is a binding site for (2E)-4-hydroxy-3-methylbut-2-enyl diphosphate. A dimethylallyl diphosphate-binding site is contributed by His131. Residue His131 participates in isopentenyl diphosphate binding. Residue Glu133 is the Proton donor of the active site. Thr170 serves as a coordination point for (2E)-4-hydroxy-3-methylbut-2-enyl diphosphate. Cys198 contacts [4Fe-4S] cluster. Residues Ser226, Asn228, and Ser271 each coordinate (2E)-4-hydroxy-3-methylbut-2-enyl diphosphate. The dimethylallyl diphosphate site is built by Ser226, Asn228, and Ser271. Residues Ser226, Asn228, and Ser271 each coordinate isopentenyl diphosphate.

Belongs to the IspH family. [4Fe-4S] cluster is required as a cofactor.

The enzyme catalyses isopentenyl diphosphate + 2 oxidized [2Fe-2S]-[ferredoxin] + H2O = (2E)-4-hydroxy-3-methylbut-2-enyl diphosphate + 2 reduced [2Fe-2S]-[ferredoxin] + 2 H(+). The catalysed reaction is dimethylallyl diphosphate + 2 oxidized [2Fe-2S]-[ferredoxin] + H2O = (2E)-4-hydroxy-3-methylbut-2-enyl diphosphate + 2 reduced [2Fe-2S]-[ferredoxin] + 2 H(+). It functions in the pathway isoprenoid biosynthesis; dimethylallyl diphosphate biosynthesis; dimethylallyl diphosphate from (2E)-4-hydroxy-3-methylbutenyl diphosphate: step 1/1. It participates in isoprenoid biosynthesis; isopentenyl diphosphate biosynthesis via DXP pathway; isopentenyl diphosphate from 1-deoxy-D-xylulose 5-phosphate: step 6/6. Its function is as follows. Catalyzes the conversion of 1-hydroxy-2-methyl-2-(E)-butenyl 4-diphosphate (HMBPP) into a mixture of isopentenyl diphosphate (IPP) and dimethylallyl diphosphate (DMAPP). Acts in the terminal step of the DOXP/MEP pathway for isoprenoid precursor biosynthesis. The polypeptide is 4-hydroxy-3-methylbut-2-enyl diphosphate reductase (Halalkalibacterium halodurans (strain ATCC BAA-125 / DSM 18197 / FERM 7344 / JCM 9153 / C-125) (Bacillus halodurans)).